Reading from the N-terminus, the 180-residue chain is SAGA-associated factor 11 homolog (180 aa).

The SGF11-type zinc-finger motif lies at 98–119 (CSCPNCNRIVAASRFAPHLEKC). The disordered stretch occupies residues 138 to 180 (RDGGNYFGADEDDEDDADWSGEKRKKKIAPVRTNGSKKNGKTS). Residues 146–156 (ADEDDEDDADW) show a composition bias toward acidic residues.

It belongs to the SGF11 family. As to quaternary structure, component of some SAGA transcription coactivator-HAT complexes. Within the SAGA complex, participates in a subcomplex of SAGA called the DUB module (deubiquitination module).

The protein localises to the nucleus. Functionally, component of the transcription regulatory histone acetylation (HAT) complex SAGA, a multiprotein complex that activates transcription by remodeling chromatin and mediating histone acetylation and deubiquitination. Within the SAGA complex, participates in a subcomplex that specifically deubiquitinates histone H2B. The SAGA complex is recruited to specific gene promoters by activators, where it is required for transcription. The sequence is that of SAGA-associated factor 11 homolog from Aedes aegypti (Yellowfever mosquito).